Consider the following 566-residue polypeptide: Chondroitin sulfate proteoglycan 5 (566 aa).

An N-terminal signal peptide occupies residues 1–30; sequence MGRAGGGGPGRGPPPLLLFLGAALVLASGA. The Extracellular portion of the chain corresponds to 31-423; that stretch reads VPAREAGSAV…SIITDFQVMC (393 aa). O-linked (Xyl...) (chondroitin sulfate) serine glycosylation occurs at serine 38. The tract at residues 39–82 is disordered; that stretch reads AVEAEELVKGSPAWEPPANDTREEAGPPAAGEDEASWTAPGGEL. N-linked (GlcNAc...) asparagine glycosylation is present at asparagine 57. O-linked (Xyl...) (chondroitin sulfate) serine glycosylation is present at serine 117. 3 disordered regions span residues 143 to 202, 215 to 248, and 262 to 354; these read IPEA…LEPQ, GLDG…TPSW, and ESDF…ASSE. A glycan (O-linked (GalNAc...) serine) is linked at serine 165. The interval 264-301 is interaction with TNC and TNR; sequence DFYPTTSFYDDLDEEEEEEEDDKDAVGGGDLEDENELL. Over residues 273–286 the composition is skewed to acidic residues; that stretch reads DDLDEEEEEEEDDK. One can recognise an EGF-like domain in the interval 371–413; the sequence is RSVCDLFPSYCHNGGQCYLVENIGAFCRCNTQDYIWHKGMRCE. Cystine bridges form between cysteine 374-cysteine 387, cysteine 381-cysteine 397, and cysteine 399-cysteine 412. The helical transmembrane segment at 424-444 threads the bilayer; that stretch reads VAVGSAALVLLLLFMMTVFFA. Positions 442 to 460 are interaction with GOPC; it reads FFAKKLYLLKTENTKLRRT. Over 445–566 the chain is Cytoplasmic; sequence KKLYLLKTEN…DVNCLQNNLT (122 aa). Phosphoserine occurs at positions 467, 475, 483, and 543.

Binds TNR and probably TNC. Interacts with ERBB3 and GOPC. Interacts with MDK; this interaction is independent of the presence of chondroitin sulfate chains and promotes elongation of oligodendroglial precursor-like cells. In terms of processing, N-glycosylated. Post-translationally, O-glycosylated; contains chondroitin sulfate glycans. Part-time proteoglycan, expressed in part as a proteoglycan exhibiting chondroitin sulfate glycans and in part as a non-proteoglycan form. The relative amount of both forms depends on tissues and tissue maturation. Phosphorylated; in intracellular and extracellular parts. As to expression, detected in cerebrospinal fluid (at protein level). Detected in urine (at protein level). Expressed in brain (at protein level).

Its subcellular location is the cell membrane. It is found in the synaptic cell membrane. The protein resides in the endoplasmic reticulum membrane. It localises to the golgi apparatus membrane. The protein localises to the cell surface. Its subcellular location is the secreted. Its function is as follows. May function as a growth and differentiation factor involved in neuritogenesis. May induce ERBB3 activation. The chain is Chondroitin sulfate proteoglycan 5 (CSPG5) from Homo sapiens (Human).